A 129-amino-acid chain; its full sequence is MNDLINFEIVTPLGVIYQGEVKSVTLPGSEGEFGVLKGHATLVSSLKSGVIDIEKADLNHELIAIDAGHAKVDEDKICVLAKGAVWVCGSDESEIEKNLAQAKDLIKSMSSDNAALAATFSKLDNARMH.

This sequence belongs to the ATPase epsilon chain family. As to quaternary structure, F-type ATPases have 2 components, CF(1) - the catalytic core - and CF(0) - the membrane proton channel. CF(1) has five subunits: alpha(3), beta(3), gamma(1), delta(1), epsilon(1). CF(0) has three main subunits: a, b and c.

It localises to the cell inner membrane. Its function is as follows. Produces ATP from ADP in the presence of a proton gradient across the membrane. The protein is ATP synthase epsilon chain of Campylobacter jejuni subsp. jejuni serotype O:6 (strain 81116 / NCTC 11828).